We begin with the raw amino-acid sequence, 89 residues long: Large ribosomal subunit protein bL27 (89 aa).

Residues 1–22 (MAHKKAGGSSRNGRDSESKRLG) form a disordered region.

It belongs to the bacterial ribosomal protein bL27 family.

In Rhizobium etli (strain CIAT 652), this protein is Large ribosomal subunit protein bL27.